Reading from the N-terminus, the 413-residue chain is Hemocyanin type 2 unit e (413 aa).

Asn17 is a glycosylation site (N-linked (GlcNAc...) (high mannose) asparagine). Position 49 (His49) interacts with Cu cation. Cys55 and Cys66 form a disulfide bridge. Positions 67-69 (CVH) form a cross-link, 2'-(S-cysteinyl)-histidine (Cys-His). The Cu cation site is built by His69 and His78. A glycan (N-linked (GlcNAc...) (high mannose) asparagine) is linked at Asn127. 2 disulfides stabilise this stretch: Cys179–Cys246 and Cys336–Cys342. Cu cation is bound by residues His189, His193, and His220.

It belongs to the tyrosinase family. Hemocyanin subfamily. In terms of assembly, decamers of large identical subunits, each containing 8 globular oxygen-binding functional units. Requires Cu(2+) as cofactor. In terms of tissue distribution, hemolymph.

The protein resides in the secreted. The protein localises to the extracellular space. Functionally, hemocyanins are copper-containing oxygen carriers occurring freely dissolved in the hemolymph of many mollusks and arthropods. The sequence is that of Hemocyanin type 2 unit e from Rapana venosa (Veined rapa whelk).